Reading from the N-terminus, the 62-residue chain is Bacteriocin piscicolin-126 (62 aa).

Residues 1-18 constitute a propeptide that is removed on maturation; sequence MKTVKELSVKEMQLTTGG. A disulfide bridge links cysteine 27 with cysteine 32.

Its subcellular location is the secreted. In terms of biological role, inhibits the growth of several Gram-positive bacteria, especially the food-borne pathogen L.monocytogenes, but has no effect on the growth of a number of yeasts and Gram-negative bacteria. This is Bacteriocin piscicolin-126 (pisA) from Carnobacterium maltaromaticum (Carnobacterium piscicola).